We begin with the raw amino-acid sequence, 312 residues long: Nicotinamide adenine dinucleotide transporter 1, chloroplastic (312 aa).

Solcar repeat units lie at residues 11-103, 111-199, and 211-299; these read KNVL…LKSF, LSVG…IKVY, and LNAR…VHRF. 6 helical membrane-spanning segments follow: residues 17 to 37, 78 to 98, 117 to 137, 171 to 191, 216 to 232, and 271 to 293; these read AAAG…LDVI, GLSP…TMYD, VLAA…LWVV, GLYS…IQFP, VAVA…TLTY, and FYRG…FTSF.

The protein belongs to the mitochondrial carrier (TC 2.A.29) family. In terms of tissue distribution, highly expressed in young leaf mesophyll cells, root tips and at the branches of adventitious roots. Low expression in all flower tissues and not detected in siliques and seeds.

It localises to the plastid. The protein localises to the chloroplast membrane. Inhibited by pyridoxal 5'-phosphate, bathophenanthroline, tannic acid, mersalyl, mercuric chloride, p-hydroxymercuribenzoate, p-hydroxymercuribenzoate sulfonate, bromocresol purple and N-ethylmaleimide. Mediates the NAD(+) import into chloroplast. Favors the NAD(+)(in)/ADP or AMP(out) antiport exchange, but is also able to catalyze a low unidirectional transport (uniport) of NAD(+). Transports NAD(+), nicotinic acid adenine dinucleotide, nicotinamide mononucleotide, nicotinic acid mononucleotide, FAD, FMN, TTP, TDP, TMP, UTP, UDP, UMP, CTP, CDP, CMP, GTP, GDP, GMP, 3'-AMP, ATP, ADP, and AMP, has low transport activity with cAMP, pyrophosphate, NADH and alpha-NAD(+), and has no activity with NADP(+), NADPH, nicotinamide, nicotinic acid, adenosine, thiamine mono- or diphosphate, inorganic phosphate, CoA, folate, NaCl, malate, malonate, citrate, fumarate, aspartate, glutamate, S-adenosylmethionine, lysine, arginine, and ornithine. The chain is Nicotinamide adenine dinucleotide transporter 1, chloroplastic (NDT1) from Arabidopsis thaliana (Mouse-ear cress).